Here is a 524-residue protein sequence, read N- to C-terminus: Bifunctional NAD(P)H-hydrate repair enzyme Nnr (524 aa).

The interval 1–219 is NAD(P)H-hydrate epimerase; that stretch reads MKVARVSEIK…ISYPRALLED (219 aa). The region spanning 9 to 218 is the YjeF N-terminal domain; it reads IKLLDREAAE…HISYPRALLE (210 aa). Residues 57–61 are NADPHX 1; for epimerase activity; sequence NNGGD. Residues asparagine 58 and aspartate 128 each coordinate K(+). Residues 132–138 form an NADPHX 1; for epimerase activity region; that stretch reads GTGLSRP. 2 residues coordinate (6S)-NADPHX: tyrosine 143 and aspartate 161. A K(+)-binding site is contributed by serine 164. Residues 224–507 form the YjeF C-terminal domain; it reads VETNDPVPLP…NYLPKALRAL (284 aa). The interval 224–524 is ADP-dependent (S)-NAD(P)H-hydrate dehydratase; sequence VETNDPVPLP…LERYTIKVLP (301 aa). Residue glycine 330 coordinates (6S)-NADPHX. The segment at 381–387 is NADPHX 2; for dehydratase activity; the sequence is HAGEMSR. Residues 418–422 and 438–447 contribute to the ADP site; these read KGAHT and NPGMATAGSG. Residue aspartate 448 participates in (6S)-NADPHX binding.

The protein in the N-terminal section; belongs to the NnrE/AIBP family. It in the C-terminal section; belongs to the NnrD/CARKD family. Requires K(+) as cofactor.

It catalyses the reaction (6S)-NADHX + ADP = AMP + phosphate + NADH + H(+). The enzyme catalyses (6S)-NADPHX + ADP = AMP + phosphate + NADPH + H(+). It carries out the reaction (6R)-NADHX = (6S)-NADHX. The catalysed reaction is (6R)-NADPHX = (6S)-NADPHX. Functionally, bifunctional enzyme that catalyzes the epimerization of the S- and R-forms of NAD(P)HX and the dehydration of the S-form of NAD(P)HX at the expense of ADP, which is converted to AMP. This allows the repair of both epimers of NAD(P)HX, a damaged form of NAD(P)H that is a result of enzymatic or heat-dependent hydration. The sequence is that of Bifunctional NAD(P)H-hydrate repair enzyme Nnr (nnr) from Thermofilum pendens (strain DSM 2475 / Hrk 5).